Consider the following 240-residue polypeptide: Large ribosomal subunit protein uL1 (240 aa).

This sequence belongs to the universal ribosomal protein uL1 family. In terms of assembly, part of the 50S ribosomal subunit.

Its function is as follows. Binds directly to 23S rRNA. The L1 stalk is quite mobile in the ribosome, and is involved in E site tRNA release. In terms of biological role, protein L1 is also a translational repressor protein, it controls the translation of the L11 operon by binding to its mRNA. This Streptomyces griseus subsp. griseus (strain JCM 4626 / CBS 651.72 / NBRC 13350 / KCC S-0626 / ISP 5235) protein is Large ribosomal subunit protein uL1.